The sequence spans 390 residues: Queuine tRNA-ribosyltransferase (390 aa).

The Proton acceptor role is filled by D92. Substrate-binding positions include 92–96, D146, Q195, and G222; that span reads DSGGF. Positions 253–259 are RNA binding; sequence GVGTPED. The Nucleophile role is filled by D272. Positions 277 to 281 are RNA binding; important for wobble base 34 recognition; sequence TRNAR. Zn(2+)-binding residues include C310, C312, C315, and H354.

The protein belongs to the queuine tRNA-ribosyltransferase family. Homodimer. Within each dimer, one monomer is responsible for RNA recognition and catalysis, while the other monomer binds to the replacement base PreQ1. It depends on Zn(2+) as a cofactor.

It catalyses the reaction 7-aminomethyl-7-carbaguanine + guanosine(34) in tRNA = 7-aminomethyl-7-carbaguanosine(34) in tRNA + guanine. The protein operates within tRNA modification; tRNA-queuosine biosynthesis. Catalyzes the base-exchange of a guanine (G) residue with the queuine precursor 7-aminomethyl-7-deazaguanine (PreQ1) at position 34 (anticodon wobble position) in tRNAs with GU(N) anticodons (tRNA-Asp, -Asn, -His and -Tyr). Catalysis occurs through a double-displacement mechanism. The nucleophile active site attacks the C1' of nucleotide 34 to detach the guanine base from the RNA, forming a covalent enzyme-RNA intermediate. The proton acceptor active site deprotonates the incoming PreQ1, allowing a nucleophilic attack on the C1' of the ribose to form the product. After dissociation, two additional enzymatic reactions on the tRNA convert PreQ1 to queuine (Q), resulting in the hypermodified nucleoside queuosine (7-(((4,5-cis-dihydroxy-2-cyclopenten-1-yl)amino)methyl)-7-deazaguanosine). The chain is Queuine tRNA-ribosyltransferase from Verminephrobacter eiseniae (strain EF01-2).